The primary structure comprises 194 residues: Peptidyl-tRNA hydrolase (194 aa).

TRNA is bound at residue tyrosine 17. Histidine 22 acts as the Proton acceptor in catalysis. The tRNA site is built by tyrosine 68, asparagine 70, and asparagine 115.

The protein belongs to the PTH family. As to quaternary structure, monomer.

It localises to the cytoplasm. It carries out the reaction an N-acyl-L-alpha-aminoacyl-tRNA + H2O = an N-acyl-L-amino acid + a tRNA + H(+). Its function is as follows. Hydrolyzes ribosome-free peptidyl-tRNAs (with 1 or more amino acids incorporated), which drop off the ribosome during protein synthesis, or as a result of ribosome stalling. Functionally, catalyzes the release of premature peptidyl moieties from peptidyl-tRNA molecules trapped in stalled 50S ribosomal subunits, and thus maintains levels of free tRNAs and 50S ribosomes. The sequence is that of Peptidyl-tRNA hydrolase from Pseudoalteromonas atlantica (strain T6c / ATCC BAA-1087).